The following is a 608-amino-acid chain: 2',5'-phosphodiesterase 12 (608 aa).

A mitochondrion-targeting transit peptide spans 1–16 (MWRLPGRSALRGVRSV). The span at 90–99 (AAKKSRKNRA) shows a compositional bias: basic residues. Residues 90 to 111 (AAKKSRKNRAHSSGGAACEATG) form a disordered region. Serine 216 is modified (phosphoserine). Mg(2+) is bound by residues glutamate 350, aspartate 495, and asparagine 497. Catalysis depends on aspartate 495, which acts as the Proton donor/acceptor.

It belongs to the CCR4/nocturin family. It depends on Mg(2+) as a cofactor.

The protein resides in the mitochondrion matrix. It catalyses the reaction Exonucleolytic cleavage of poly(A) to 5'-AMP.. Its function is as follows. Enzyme that cleaves 2',5'-phosphodiester bond linking adenosines of the 5'-triphosphorylated oligoadenylates, triphosphorylated oligoadenylates referred as 2-5A modulates the 2-5A system. Degrades triphosphorylated 2-5A to produce AMP and ATP. Also cleaves 3',5'-phosphodiester bond of oligoadenylates. Plays a role as a negative regulator of the 2-5A system that is one of the major pathways for antiviral and antitumor functions induced by interferons (IFNs). Suppression of this enzyme increases cellular 2-5A levels and decreases viral replication in cultured small-airway epithelial cells. This Mus musculus (Mouse) protein is 2',5'-phosphodiesterase 12 (Pde12).